Consider the following 168-residue polypeptide: MSVANSRTAVYPGTFDPITNGHIDLVNRAAPLFERVVVGVAYSPSKGPALSLERRVALAQEALAAHANVEVRGFDTLLAHFVREMGAGVLLRGLRAVSDFEYEFQMASMNRHLIPEVETLFLTPAEQYSFISSSLVREIARLGGDVSGFVPASVVEALRQVRQSRAQA.

Substrate is bound at residue threonine 14. Residues 14–15 (TF) and histidine 22 each bind ATP. The substrate site is built by lysine 46, leucine 78, and arginine 92. ATP contacts are provided by residues 93 to 95 (GLR), glutamate 103, and 128 to 134 (YSFISSS).

It belongs to the bacterial CoaD family. Homohexamer. The cofactor is Mg(2+).

The protein localises to the cytoplasm. The catalysed reaction is (R)-4'-phosphopantetheine + ATP + H(+) = 3'-dephospho-CoA + diphosphate. It participates in cofactor biosynthesis; coenzyme A biosynthesis; CoA from (R)-pantothenate: step 4/5. Reversibly transfers an adenylyl group from ATP to 4'-phosphopantetheine, yielding dephospho-CoA (dPCoA) and pyrophosphate. The protein is Phosphopantetheine adenylyltransferase of Xanthomonas axonopodis pv. citri (strain 306).